The primary structure comprises 426 residues: uncharacterized protein (426 aa).

To M.leprae L518_C2_147 and M.tuberculosis Rv1524.

This is an uncharacterized protein from Mycobacterium tuberculosis (strain CDC 1551 / Oshkosh).